Consider the following 411-residue polypeptide: Multifunctional CCA protein (411 aa).

ATP contacts are provided by Gly8 and Arg11. 2 residues coordinate CTP: Gly8 and Arg11. The Mg(2+) site is built by Asp21 and Asp23. ATP-binding residues include Arg91, Arg137, and Arg140. Residues Arg91, Arg137, and Arg140 each coordinate CTP. The HD domain maps to 228–329 (CGIHTLMVAK…VNILDQIDSW (102 aa)).

It belongs to the tRNA nucleotidyltransferase/poly(A) polymerase family. Bacterial CCA-adding enzyme type 1 subfamily. As to quaternary structure, monomer. Can also form homodimers and oligomers. Requires Mg(2+) as cofactor. It depends on Ni(2+) as a cofactor.

The enzyme catalyses a tRNA precursor + 2 CTP + ATP = a tRNA with a 3' CCA end + 3 diphosphate. It catalyses the reaction a tRNA with a 3' CCA end + 2 CTP + ATP = a tRNA with a 3' CCACCA end + 3 diphosphate. In terms of biological role, catalyzes the addition and repair of the essential 3'-terminal CCA sequence in tRNAs without using a nucleic acid template. Adds these three nucleotides in the order of C, C, and A to the tRNA nucleotide-73, using CTP and ATP as substrates and producing inorganic pyrophosphate. tRNA 3'-terminal CCA addition is required both for tRNA processing and repair. Also involved in tRNA surveillance by mediating tandem CCA addition to generate a CCACCA at the 3' terminus of unstable tRNAs. While stable tRNAs receive only 3'-terminal CCA, unstable tRNAs are marked with CCACCA and rapidly degraded. This chain is Multifunctional CCA protein, found in Photobacterium profundum (strain SS9).